Consider the following 109-residue polypeptide: Large ribosomal subunit protein uL23 (109 aa).

It belongs to the universal ribosomal protein uL23 family. As to quaternary structure, part of the 50S ribosomal subunit. Contacts protein L29, and trigger factor when it is bound to the ribosome.

Functionally, one of the early assembly proteins it binds 23S rRNA. One of the proteins that surrounds the polypeptide exit tunnel on the outside of the ribosome. Forms the main docking site for trigger factor binding to the ribosome. This Aquifex pyrophilus protein is Large ribosomal subunit protein uL23.